The sequence spans 239 residues: MVIKAQSPAGFAEEYLIESIWNNRFPPGSILPAERELSELIGVTRTTLREVLQRLARDGWLTIRHGKPTQVNNFWETSGLNILETLARLDHDSVPQLIDNVLAVRTNIAAIFIRAAVRQHPDRVQAIVADAPTVEDSADAFADLDYRIFRALAFACGNPIYGLILNGLKGLYTRVGRYYFSNPQARRLALAFYSRLGELAASRQYDRVMDFVRSYGKESGAIWHGMQSGIPRDLADGHA.

Residues 6–74 (QSPAGFAEEY…HGKPTQVNNF (69 aa)) enclose the HTH gntR-type domain. Positions 34–53 (ERELSELIGVTRTTLREVLQ) form a DNA-binding region, H-T-H motif.

As to quaternary structure, homodimer.

It is found in the cytoplasm. In terms of biological role, multifunctional regulator of fatty acid metabolism. In Edwardsiella ictaluri (strain 93-146), this protein is Fatty acid metabolism regulator protein.